Reading from the N-terminus, the 374-residue chain is O-methyltransferase acrG (374 aa).

The S-adenosyl-L-homocysteine site is built by Tyr-19, Asn-70, Asp-96, Ser-128, and Phe-129. Mg(2+) is bound at residue Phe-245.

It belongs to the methyltransferase superfamily. Type-7 methyltransferase family.

It participates in secondary metabolite biosynthesis. In terms of biological role, O-methyltransferase; part of the cluster that mediates the biosynthesis of acurin A, a highly reduced polyketide coupled to a serine via a peptide bond. The activities of the highly reducing polyketide synthase acrA and the nonribosomal peptide synthetase acrB are collectively responsible for the synthesis of the acurin A core structure with a heptaketide backbone produced by acrA covalently fused to a L-serine by acrB. After the formation of the PK-NRP hybrid product, it is detached from acrB by reductive release to set up the formation of the lactam ring by aldol condensation. The hydrolyase acrC then catalyzes water loss to generate a double bond in the ring. This double bond is probably reduced, which is followed by three oxidations at C-22 to generate the carboxylic acid moiety, involving probably the FAD-binding monooxygenase acrE and the cytochrome P450 monooxygenases acrD and acrF. Finally, a last methylation step performed by the O-methyltransferase acrG leads to the production of acurin A. The protein is O-methyltransferase acrG of Aspergillus aculeatus (strain ATCC 16872 / CBS 172.66 / WB 5094).